The following is a 255-amino-acid chain: Small ribosomal subunit protein uS2 (255 aa).

The segment at Gln226–Glu255 is disordered.

The protein belongs to the universal ribosomal protein uS2 family.

The protein is Small ribosomal subunit protein uS2 of Staphylococcus aureus (strain Mu3 / ATCC 700698).